The following is a 244-amino-acid chain: 3-deoxy-manno-octulosonate cytidylyltransferase (244 aa).

The protein belongs to the KdsB family.

The protein localises to the cytoplasm. The enzyme catalyses 3-deoxy-alpha-D-manno-oct-2-ulosonate + CTP = CMP-3-deoxy-beta-D-manno-octulosonate + diphosphate. It participates in nucleotide-sugar biosynthesis; CMP-3-deoxy-D-manno-octulosonate biosynthesis; CMP-3-deoxy-D-manno-octulosonate from 3-deoxy-D-manno-octulosonate and CTP: step 1/1. It functions in the pathway bacterial outer membrane biogenesis; lipopolysaccharide biosynthesis. Functionally, activates KDO (a required 8-carbon sugar) for incorporation into bacterial lipopolysaccharide in Gram-negative bacteria. This Ruthia magnifica subsp. Calyptogena magnifica protein is 3-deoxy-manno-octulosonate cytidylyltransferase.